A 29-amino-acid chain; its full sequence is SWCDPATIKYVSGLTGCRAMVKLECLGSQ.

It belongs to the protease inhibitor I6 (cereal trypsin/alpha-amylase inhibitor) family.

It localises to the secreted. Functionally, alpha-amylase inhibitor. This chain is Alpha-amylase inhibitor 2, found in Saussurea costus (Costus).